The chain runs to 347 residues: GMP reductase (347 aa).

108–131 (TDFIKLSEILAKSEDLNFICIDIA) lines the NADP(+) pocket. K(+) is bound by residues glycine 181 and glycine 183. Catalysis depends on cysteine 186, which acts as the Thioimidate intermediate. 216 to 239 (IIGDGGCSCAGDVAKAFGGGADFV) is an NADP(+) binding site.

Belongs to the IMPDH/GMPR family. GuaC type 1 subfamily. In terms of assembly, homotetramer.

It catalyses the reaction IMP + NH4(+) + NADP(+) = GMP + NADPH + 2 H(+). Functionally, catalyzes the irreversible NADPH-dependent deamination of GMP to IMP. It functions in the conversion of nucleobase, nucleoside and nucleotide derivatives of G to A nucleotides, and in maintaining the intracellular balance of A and G nucleotides. The polypeptide is GMP reductase (Shewanella pealeana (strain ATCC 700345 / ANG-SQ1)).